A 499-amino-acid polypeptide reads, in one-letter code: Neuronal acetylcholine receptor subunit alpha-3 (499 aa).

The signal sequence occupies residues 1–25 (MGVVLLPPPLSMLMLVLMLLPAASA). At 26 to 244 (SEAEHRLFQY…PLFYTINLII (219 aa)) the chain is on the extracellular side. N-linked (GlcNAc...) asparagine glycans are attached at residues Asn-49 and Asn-166. Cystine bridges form between Cys-153–Cys-167 and Cys-217–Cys-218. Residues 245–260 (PCLLISFLTVLVFYLP) form a helical membrane-spanning segment. Topologically, residues 261–262 (SD) are cytoplasmic. The chain crosses the membrane as a helical span at residues 263–279 (CGEKVTLCISVLLSLTV). Glu-265 is a binding site for Na(+). At 280–301 (FLLVITETIPSTSLVIPLIGEY) the chain is on the extracellular side. The helical transmembrane segment at 302–320 (LLFTMIFVTLSIVITVFVL) threads the bilayer. The Cytoplasmic segment spans residues 321–468 (NVHYRTPTTH…QDDWKYVAMV (148 aa)). 2 positions are modified to phosphoserine: Ser-407 and Ser-410. A helical membrane pass occupies residues 469-487 (IDRIFLWVFILVCILGTAG). Topologically, residues 488–499 (LFLQPLMARDDT) are extracellular.

The protein belongs to the ligand-gated ion channel (TC 1.A.9) family. Acetylcholine receptor (TC 1.A.9.1) subfamily. Alpha-3/CHRNA3 sub-subfamily. Neuronal AChR is composed of two different types of subunits: alpha and beta. CHRNA3/Alpha-3 subunit can be combined to CHRNB2/beta-2 or CHRNB4/beta-4 to give rise to functional receptors. Part of a complex composed of STUB1/CHIP, VCP/p97, CHRNA3, and UBXN2A that modulates the ubiquitination and endoplasmic reticulum-associated degradation (ERAD) of CHRNA3. Within the complex UBXN2A acts as a scaffold protein required for the interaction of CHRNA3 with VCP/p97, this interaction also inhibits CHRNA3 ubiquitination by STUB1/CHIP and subsequently ERAD. Interacts with UBXN2A (via SEP domain), the interaction is required for the interaction of CHRNA3 in the STUB1:VCP:UBXN2A complex. Interacts with RIC3; which is required for proper folding and assembly. Post-translationally, ubiquitinated; by STUB1/CHIP and thereafter degraded by the 26S proteosome complex. Expressed in neurons. Expressed in umbrella cells of urothelium (at protein level).

It is found in the synaptic cell membrane. The protein localises to the cell membrane. It localises to the endoplasmic reticulum. The protein resides in the golgi apparatus. The catalysed reaction is Ca(2+)(in) = Ca(2+)(out). The enzyme catalyses K(+)(in) = K(+)(out). It carries out the reaction Na(+)(in) = Na(+)(out). Activated by a myriad of ligands such as acetylcholine, cytisine, nicotine, choline and epibatidine. The heteropentamer CHRNA3:CHRNB2 activity is blocked by alpha-conotoxins ImI, ImII, PnIA, GID and MII. The heteropentamer CHRNA3:CHRNB4 activity is blocked by the alpha-conotoxin ImI and AuIB. Functionally, component of neuronal acetylcholine receptors (nAChRs) that function as pentameric, ligand-gated cation channels with high calcium permeability among other activities. nAChRs are excitatory neurotrasnmitter receptors formed by a collection of nAChR subunits known to mediate synaptic transmission in the nervous system and the neuromuscular junction. Each nAchR subunit confers differential attributes to channel properties, including activation, deactivation and desensitization kinetics, pH sensitivity, cation permeability, and binding to allosteric modulators. CHRNA3 forms heteropentameric neuronal acetylcholine receptors with CHRNB2 and CHRNB4. CHRNA3:CHRNB4 being predominant in neurons of the autonomic ganglia, it is known as ganglionic nicotinic receptor. CHRNA3:CHRNB4 also plays an important role in the habenulo-interpeduncular tract, modulating the mesolimbic dopamine system and affecting reward circuits and addiction. Hypothalamic CHRNA3:CHRNB4 nAChR activation by nicotine leads to activation of POMC neurons and a decrease in food intake. Also expressed in the urothelium where it modulates reflex bladder activity by increasing intracellular calcium through extracellular influx and basal ATP release. The polypeptide is Neuronal acetylcholine receptor subunit alpha-3 (Chrna3) (Rattus norvegicus (Rat)).